The sequence spans 398 residues: Elongation factor Tu (398 aa).

One can recognise a tr-type G domain in the interval 10 to 207; that stretch reads KPHVNIGTIG…TVDEYIPEPE (198 aa). The G1 stretch occupies residues 19 to 26; it reads GHVDHGKT. Position 19–26 (19–26) interacts with GTP; that stretch reads GHVDHGKT. Thr26 is a Mg(2+) binding site. The interval 63-67 is G2; that stretch reads GITIN. The tract at residues 84–87 is G3; sequence DAPG. GTP is bound by residues 84–88 and 139–142; these read DAPGH and NKVD. The segment at 139-142 is G4; that stretch reads NKVD. The G5 stretch occupies residues 177 to 179; the sequence is SAL.

It belongs to the TRAFAC class translation factor GTPase superfamily. Classic translation factor GTPase family. EF-Tu/EF-1A subfamily. As to quaternary structure, monomer.

The protein resides in the cytoplasm. It carries out the reaction GTP + H2O = GDP + phosphate + H(+). Its function is as follows. GTP hydrolase that promotes the GTP-dependent binding of aminoacyl-tRNA to the A-site of ribosomes during protein biosynthesis. The chain is Elongation factor Tu from Streptococcus sanguinis (strain SK36).